We begin with the raw amino-acid sequence, 310 residues long: Ribosomal RNA small subunit methyltransferase H (310 aa).

S-adenosyl-L-methionine is bound by residues Ala33–His35, Asp53, Phe79, Asp100, and Gln107.

This sequence belongs to the methyltransferase superfamily. RsmH family.

It localises to the cytoplasm. It catalyses the reaction cytidine(1402) in 16S rRNA + S-adenosyl-L-methionine = N(4)-methylcytidine(1402) in 16S rRNA + S-adenosyl-L-homocysteine + H(+). Specifically methylates the N4 position of cytidine in position 1402 (C1402) of 16S rRNA. The sequence is that of Ribosomal RNA small subunit methyltransferase H from Desulfitobacterium hafniense (strain DSM 10664 / DCB-2).